The primary structure comprises 197 residues: Protein TIFY 9 (197 aa).

A compositionally biased stretch (polar residues) spans 57-73 (STGNNSDSSAKSRSVPS). Positions 57 to 84 (STGNNSDSSAKSRSVPSTPREDQPQIPI) are disordered. A Tify domain is found at 98–132 (LVSGTVPMTIFYNGSVSVFQVSRNKAGEIMKVANE). A Jas motif is present at residues 168 to 193 (PIARRKSLQRFLEKRKERLVSTSPYY). The Nuclear localization signal motif lies at 170-177 (ARRKSLQR).

It belongs to the TIFY/JAZ family. Homo- and heterodimer. Interacts with MYC2, MYC3, MYC4, AFPH2/NINJA, TIFY10A/JAZ1, TIFY10B/JAZ2, TIFY6B/JAZ3, TIFY6A/JAZ4, TIFY11B/JAZ6, TIFY5A/JAZ8, TIFY7/JAZ9, TIFY3A/JAZ11 and TIFY3B/JAZ12. Isoform 1 and isoform 2 interact with COI1. Isoform 3 does not interact with COI1. Interacts with RHD6 and RSL1. Post-translationally, ubiquitinated. Targeted for degradation by the SCF(COI1) E3 ubiquitin ligase-proteasome pathway during jasmonate signaling.

The protein resides in the nucleus. Its function is as follows. Repressor of jasmonate (JA) responses that lacks the entire Jas domain and possesses severe JA insensitivity and resistance to JA-induced degradation. Acts as an endogenous repressor of JA signal output in JA-stimulated cells. Modulator of JA-controlled growth inhibition in response to wounding. Repressor of jasmonate (JA) responses that lacks part of the Jas domain and possesses JA insensitivity and partial resistance to JA-induced degradation. In terms of biological role, repressor of jasmonate (JA) responses. Interacts with and suppresses RHD6 and RSL1 transcription factor activities to negatively regulate jasmonate-stimulated root hair development. This Arabidopsis thaliana (Mouse-ear cress) protein is Protein TIFY 9 (TIFY9).